Here is a 211-residue protein sequence, read N- to C-terminus: MSVTALGMMLIAYLCGSISSAILFCRIAGLPDPRQHGSGNPGATNVLRIGGKAAAATVLVFDVLKGMLPVWAAYALGVSPLYLGLTAIAACLGHIYPVFFHFRGGKGVATAFGAIAPIGWDLTGLMTGTWLLTVLLSGYSSLGAIVSALIAPFYVWWFKPQFTFPVAMLSCLILMRHHDNIQRLWRGQESKIWNKLRKKKQPEDEKTSPEE.

4 helical membrane-spanning segments follow: residues Ala-5–Cys-25, Pro-80–Phe-100, Phe-112–Leu-132, and Gly-138–Phe-158.

This sequence belongs to the PlsY family. Probably interacts with PlsX.

It localises to the cell inner membrane. The enzyme catalyses an acyl phosphate + sn-glycerol 3-phosphate = a 1-acyl-sn-glycero-3-phosphate + phosphate. Its pathway is lipid metabolism; phospholipid metabolism. Its function is as follows. Catalyzes the transfer of an acyl group from acyl-phosphate (acyl-PO(4)) to glycerol-3-phosphate (G3P) to form lysophosphatidic acid (LPA). This enzyme utilizes acyl-phosphate as fatty acyl donor, but not acyl-CoA or acyl-ACP. This chain is Glycerol-3-phosphate acyltransferase, found in Pectobacterium carotovorum subsp. carotovorum (strain PC1).